A 214-amino-acid polypeptide reads, in one-letter code: A-type ATP synthase subunit D (214 aa).

Belongs to the V-ATPase D subunit family. As to quaternary structure, has multiple subunits with at least A(3), B(3), C, D, E, F, H, I and proteolipid K(x).

The protein resides in the cell membrane. Functionally, component of the A-type ATP synthase that produces ATP from ADP in the presence of a proton gradient across the membrane. In Thermococcus kodakarensis (strain ATCC BAA-918 / JCM 12380 / KOD1) (Pyrococcus kodakaraensis (strain KOD1)), this protein is A-type ATP synthase subunit D.